Consider the following 939-residue polypeptide: Trafficking kinesin-binding protein 1 (939 aa).

In terms of domain architecture, HAP1 N-terminal spans Leu46–Thr353. Residues Lys106 to Met354 adopt a coiled-coil conformation. The interaction with HGS stretch occupies residues Arg359–Glu509. Ser444 is a glycosylation site (O-linked (GlcNAc) serine). The tract at residues Leu472–Leu492 is disordered. The stretch at His490–Leu524 forms a coiled coil. Position 534 is a phosphoserine (Ser534). The interaction with OGT stretch occupies residues Pro655–Thr669. O-linked (GlcNAc) serine glycosylation is found at Ser677 and Ser716. Phosphoserine occurs at positions 716 and 905.

It belongs to the milton family. In terms of assembly, interacts with RHOT1 and RHOT2. Found in a complex with KIF5B, OGT, RHOT1 and RHOT2. Interacts with HGS. Interacts with GABRA1. Interacts with KIF5C. Interacts with OGT; stable interaction is not required for glycosylation of this protein by OGT. Isoform 1 interacts with OGT. In terms of processing, O-glycosylated. Glycosylated by OGT; glycosylation in response to increased extracellular glucose levels is required for and leads to regulation of mitochondrial motility by OGT. Widely expressed with the greatest expression in brain, liver and kidney. Detected throughout the CNS, including the cortex, hippocamps, thalamus and various subcortical nuclei of the forebrain and midbrain, the granule of Purkinje layers of the cerebellum and the gray matter of the spinal cord. High level detected in lower moter neurons (at protein level).

It localises to the cytoplasm. The protein localises to the nucleus. It is found in the mitochondrion. Its subcellular location is the early endosome. The protein resides in the endosome. It localises to the mitochondrion membrane. The protein localises to the cell cortex. Involved in the regulation of endosome-to-lysosome trafficking, including endocytic trafficking of EGF-EGFR complexes and GABA-A receptors. Involved in mitochondrial motility. When O-glycosylated, abolishes mitochondrial motility. Crucial for recruiting OGT to the mitochondrial surface of neuronal processes. TRAK1 and RHOT form an essential protein complex that links KIF5 to mitochondria for light chain-independent, anterograde transport of mitochondria. This Mus musculus (Mouse) protein is Trafficking kinesin-binding protein 1 (Trak1).